The following is a 506-amino-acid chain: Serine/threonine-protein kinase D6PKL1 (506 aa).

Residues 1–96 form a disordered region; that stretch reads MASKYGSGVL…TCSSFSGNNK (96 aa). Positions 12–23 are enriched in basic and acidic residues; sequence ENKKEKGDKETP. Polar residues predominate over residues 24-54; that stretch reads ETSYSSQSVSVNTLADQVSSTLSFAPSSDSK. A compositionally biased stretch (basic and acidic residues) spans 55–67; that stretch reads TGGEVKFNEKSDQ. Low complexity predominate over residues 77–92; sequence STSSDISDESTCSSFS. In terms of domain architecture, Protein kinase spans 123-456; that stretch reads FRLLKRLGCG…ATEMKQHPFF (334 aa). Residues 129–137 and lysine 152 contribute to the ATP site; that span reads LGCGDIGTV. Aspartate 248 serves as the catalytic Proton acceptor. A disordered region spans residues 475-495; that stretch reads PVDYESAPATPAAATSTSVKS. The span at 480 to 492 shows a compositional bias: low complexity; the sequence is SAPATPAAATSTS.

This sequence belongs to the protein kinase superfamily. AGC Ser/Thr protein kinase family.

Its subcellular location is the cell membrane. The catalysed reaction is L-seryl-[protein] + ATP = O-phospho-L-seryl-[protein] + ADP + H(+). The enzyme catalyses L-threonyl-[protein] + ATP = O-phospho-L-threonyl-[protein] + ADP + H(+). Its function is as follows. Protein kinase that regulates the auxin transport activity of PIN auxin efflux facilitators by direct phosphorylation. D6PK-mediated PIN phosphorylation promotes auxin transport in the hypocotyl and this is a prerequisite for PHOT1-dependent hypocotyl bending. The sequence is that of Serine/threonine-protein kinase D6PKL1 (D6PKL1) from Arabidopsis thaliana (Mouse-ear cress).